We begin with the raw amino-acid sequence, 778 residues long: METFFIETLASDVYGKALNVDLDRLSQAQIKYTLQELISYCSALTILHYDYSTLAARLSVYQLHQSTASSFSKAVRLQAAQSCSRLSPQFVDVVYKYKAIFDSYIDYSRDYKLSLLGIETMKNSYLLKNKDGVIMERPQDAYMRVAIMIYGMGKVVNIKMILLTYDLLSRHIITHASPTMFNAGTKKPQLSSCFLLNVNDNLENLYDMVKTAGIISGGGGGIGLCLSGIRAKNSFISGSGLRSNGIQNYIMLQNASQCYANQGGLRPGAYAVYLELWHQDIFTFLEMPRLKGQMAEQRLNAPNLKYGLWVPDLFMEILEDQIHNRGDGRWYLFSPDQAPNLHKVFDLERSQHENAHREFKKLYYQYVAEKRYTGVTTAKEIIKAWFKTVIQVGNPYIGFKDAINRKSNLSHVGTITNSNLCIEVTIPCWEGDKAEQGVCNLAAVNLAAFIRENGYDYRGLIEASGNVTENLDNIIDNGYYPTEATRRSNMRHRPIGIGVFGLADVFASLKIKFGSPEAIAMDEAIHAALYYGAMRRSIELAKEKGSHPSFPGSAASKGLLQPDLWVRCGDLIPSWEERVAQTTQGVLTRKSWRQLRLAAIQGVRNGYLTALMPTATSSNSTGKNECFEPFTSNLYTRRTLSGEFIVLNKYLIDDLKEINLWTEAIQLQLLNAGGSIQHILDIPAEIRDRYKTSREMNQKILTKHAAARNPFVSQSMSLNYYFYEPELSQVLTVLVLGWKKGLTTGSYYCHFSPGAGTQKKIIRNSEKACNADCEACLL.

Residues Ser-177, 192-193 (SC), Gly-221, 419-423 (NLCIE), and 613-617 (PTATS) contribute to the substrate site. A disulfide bridge links Cys-193 with Cys-439. The active-site Proton acceptor is the Asn-419. The Cysteine radical intermediate role is filled by Cys-421. The Proton acceptor role is filled by Glu-423.

The protein belongs to the ribonucleoside diphosphate reductase large chain family. As to quaternary structure, heterotetramer composed of a homodimer of the large subunit (R1) and a homodimer of the small subunit (R2). Larger multisubunit protein complex are also active, composed of (R1)n(R2)n.

It catalyses the reaction a 2'-deoxyribonucleoside 5'-diphosphate + [thioredoxin]-disulfide + H2O = a ribonucleoside 5'-diphosphate + [thioredoxin]-dithiol. Its activity is regulated as follows. Under complex allosteric control mediated by deoxynucleoside triphosphates and ATP binding. The type of nucleotide bound at the specificity site determines substrate preference. It seems probable that ATP makes the enzyme reduce CDP and UDP, dGTP favors ADP reduction and dTTP favors GDP reduction. Its function is as follows. Ribonucleoside-diphosphate reductase holoenzyme provides the precursors necessary for viral DNA synthesis. Allows virus growth in non-dividing cells. Catalyzes the biosynthesis of deoxyribonucleotides from the corresponding ribonucleotides. This African swine fever virus (isolate Tick/South Africa/Pretoriuskop Pr4/1996) (ASFV) protein is Ribonucleoside-diphosphate reductase large subunit.